Here is a 97-residue protein sequence, read N- to C-terminus: DNA/RNA-binding protein Alba (97 aa).

Lysine 15 is subject to N6-acetyllysine.

The protein belongs to the histone-like Alba family. Post-translationally, acetylated. Acetylation at Lys-15 decreases DNA-binding affinity.

The protein localises to the cytoplasm. It localises to the chromosome. Functionally, binds double-stranded DNA tightly but without sequence specificity. Involved in DNA compaction. This is DNA/RNA-binding protein Alba from Ignicoccus hospitalis (strain KIN4/I / DSM 18386 / JCM 14125).